Reading from the N-terminus, the 118-residue chain is Hisactophilin-1 (118 aa).

Residue Gly-2 is the site of N-myristoyl glycine attachment. The interval Ser-8 to His-109 is contains several HHXH repeats. Tandem repeats lie at residues Phe-34–Lys-46 and Phe-74–Lys-86. Residues Phe-34–Lys-86 are 2 X 13 AA approximate repeats.

Belongs to the hisactophilin family. As to quaternary structure, homodimer or heterodimer of hatA and hatB, linked by a disulfide bond. Post-translationally, phosphorylated.

It localises to the cytoplasm. It is found in the cell membrane. Functionally, may act as an intracellular pH sensor that links chemotactic signals to responses in the microfilament system of the cells by nucleating actin polymerization or stabilizing the filaments. The protein is Hisactophilin-1 (hatA) of Dictyostelium discoideum (Social amoeba).